The following is a 296-amino-acid chain: Ribosomal RNA small subunit methyltransferase H (296 aa).

S-adenosyl-L-methionine-binding positions include 30-32 (GGH), Asp-49, Phe-76, Asp-97, and Gln-104.

This sequence belongs to the methyltransferase superfamily. RsmH family.

It is found in the cytoplasm. The catalysed reaction is cytidine(1402) in 16S rRNA + S-adenosyl-L-methionine = N(4)-methylcytidine(1402) in 16S rRNA + S-adenosyl-L-homocysteine + H(+). In terms of biological role, specifically methylates the N4 position of cytidine in position 1402 (C1402) of 16S rRNA. The sequence is that of Ribosomal RNA small subunit methyltransferase H from Mesomycoplasma hyopneumoniae (strain 232) (Mycoplasma hyopneumoniae).